Here is a 329-residue protein sequence, read N- to C-terminus: Probable allantoicase (329 aa).

It belongs to the allantoicase family.

It carries out the reaction allantoate + H2O = (S)-ureidoglycolate + urea. It participates in nitrogen metabolism; (S)-allantoin degradation; (S)-ureidoglycolate from allantoate (aminidohydrolase route): step 1/1. The polypeptide is Probable allantoicase (Nocardia farcinica (strain IFM 10152)).